The chain runs to 743 residues: MESIGDDDELRSKTVSLPRRISFTILLLLLLISLSTRVSGSLDKSGRRVIEARTGQDLIWVVQLSDLHFSVHHPERAIDFKNIVGPALALINPSLVLITGDLTDGKSKDMLTMKLNEDEWLEYESVMQDVVKRSGLNKSIFYDLRGNHDNFGVPSVGSSVDFFSKYSINGQMGRKGNVNTITVETSERKHLFVGIDTTMHIGLRGPTNLFGHPTDELLSSLDSHLSQWDNQSAKPVAKISFGHFPLSFTALSHSQKSLKDVFLKHSISAYLCGHLHSRFGKNLKRHHHSGGISLSDNDLFQLNMRQSGAESTSNCSFGALPAAEFWEWEMGDWRKNRAMRIMAIDRGHVSYVDLDFKSKPQKTIILPTFPLDSRFMSTSFARHKYECQHMISSSYDAIRAIVFSHSLVVEVVARVYDSSPGFDNLVMEAPMRKHGGDSSSSGATFFSLPWNYRAFEDPLPDRFWLQIEVTDIKGRLTLSEMRPFSINGLSSKVSWTWNEFRVMGCQWAALYYPILWPALYSLFLVFLIPKCIIIVFKKQYTLKKFIAKKGPITLVLWILQDLCRMPVVWFGYMAYLFYLIFFPWFSGEVFADSGDRAYMTIMGWVVTSSGADRKHEYIGQPDVMVVVIPHVVFVVIPSVLVVCCLVAEREIYKDHIRTVSGKKEDDHDRGRKKRSQRRSLLFSNRRLFRKSVLLASLALYWKHFKNCWALGRAYEMNVVHFPGYSLVVPLLLLYVICKTHKVP.

Residues 1 to 40 (MESIGDDDELRSKTVSLPRRISFTILLLLLLISLSTRVSG) form the signal peptide. A divalent metal cation-binding residues include aspartate 66, histidine 68, and aspartate 101. The next 5 helical transmembrane spans lie at 514-534 (ILWPALYSLFLVFLIPKCIII), 565-585 (MPVVWFGYMAYLFYLIFFPWF), 623-643 (VMVVVIPHVVFVVIPSVLVVC), 687-704 (LFRKSVLLASLALYWKHF), and 716-736 (MNVVHFPGYSLVVPLLLLYVI).

Belongs to the metallophosphoesterase superfamily. A divalent metal cation is required as a cofactor.

Its subcellular location is the membrane. The sequence is that of Putative metallophosphoesterase At3g03305 from Arabidopsis thaliana (Mouse-ear cress).